A 209-amino-acid polypeptide reads, in one-letter code: MSASMAATSTSSATATTFIKCVTVGDGAVGKTCLLISYTSNTFPTDYVPTVFDNFNANVLVDGKTVNLGLWDTAGQEDYNRVRPLSYRGADVFILAFSLISRPSFENIAKKWVPELRHYAPTVPIVLVGTKSDLRDNMQFPKNYPGACTIFPEQGQELRKEIGALAYIECSSKAQMNVKAVFDEAIKVVLHPPSKTKKRKRKIGLCHVL.

GTP is bound at residue Gly-25–Thr-32. Residues Tyr-47–Phe-55 carry the Effector region motif. Residues Asp-72–Gln-76 and Thr-130–Asp-133 each bind GTP. Cysteine methyl ester is present on Cys-206. The S-geranylgeranyl cysteine moiety is linked to residue Cys-206. Residues His-207–Leu-209 constitute a propeptide, removed in mature form.

The protein belongs to the small GTPase superfamily. Rho family. In terms of assembly, interacts with SPK1.

Its subcellular location is the cytoplasm. It localises to the membrane. Its function is as follows. Inactive GDP-bound Rho GTPases reside in the cytosol, are found in a complex with Rho GDP-dissociation inhibitors (Rho GDIs), and are released from the GDI protein in order to translocate to membranes upon activation. This chain is Rac-like GTP-binding protein ARAC9 (ARAC9), found in Arabidopsis thaliana (Mouse-ear cress).